The chain runs to 185 residues: Ribosome-recycling factor (185 aa).

A disordered region spans residues 142-165 (IVKDGDAGEDEGSRAEKELDGLTK).

Belongs to the RRF family.

The protein localises to the cytoplasm. Its function is as follows. Responsible for the release of ribosomes from messenger RNA at the termination of protein biosynthesis. May increase the efficiency of translation by recycling ribosomes from one round of translation to another. This chain is Ribosome-recycling factor, found in Renibacterium salmoninarum (strain ATCC 33209 / DSM 20767 / JCM 11484 / NBRC 15589 / NCIMB 2235).